A 364-amino-acid chain; its full sequence is Ribosomal RNA large subunit methyltransferase F (364 aa).

A compositionally biased stretch (low complexity) spans 1–17; the sequence is MPKPAIKTAAKPATSSA. The tract at residues 1–53 is disordered; sequence MPKPAIKTAAKPATSSAGKRGKPITPKSVAKPQAAKPKTVSKPKVKPGEKKRL. Residues 39–53 are compositionally biased toward basic residues; sequence TVSKPKVKPGEKKRL.

It belongs to the methyltransferase superfamily. METTL16/RlmF family.

It localises to the cytoplasm. It catalyses the reaction adenosine(1618) in 23S rRNA + S-adenosyl-L-methionine = N(6)-methyladenosine(1618) in 23S rRNA + S-adenosyl-L-homocysteine + H(+). In terms of biological role, specifically methylates the adenine in position 1618 of 23S rRNA. In Shewanella sp. (strain MR-4), this protein is Ribosomal RNA large subunit methyltransferase F.